The chain runs to 243 residues: Pyridoxine 5'-phosphate synthase (243 aa).

Asn9 contacts 3-amino-2-oxopropyl phosphate. Residue 11 to 12 (DH) coordinates 1-deoxy-D-xylulose 5-phosphate. Arg20 serves as a coordination point for 3-amino-2-oxopropyl phosphate. His45 functions as the Proton acceptor in the catalytic mechanism. The 1-deoxy-D-xylulose 5-phosphate site is built by Arg47 and His52. The Proton acceptor role is filled by Glu72. Thr102 is a 1-deoxy-D-xylulose 5-phosphate binding site. The Proton donor role is filled by His193. 3-amino-2-oxopropyl phosphate contacts are provided by residues Gly194 and 215–216 (GH).

It belongs to the PNP synthase family. Homooctamer; tetramer of dimers.

The protein resides in the cytoplasm. It carries out the reaction 3-amino-2-oxopropyl phosphate + 1-deoxy-D-xylulose 5-phosphate = pyridoxine 5'-phosphate + phosphate + 2 H2O + H(+). It functions in the pathway cofactor biosynthesis; pyridoxine 5'-phosphate biosynthesis; pyridoxine 5'-phosphate from D-erythrose 4-phosphate: step 5/5. Catalyzes the complicated ring closure reaction between the two acyclic compounds 1-deoxy-D-xylulose-5-phosphate (DXP) and 3-amino-2-oxopropyl phosphate (1-amino-acetone-3-phosphate or AAP) to form pyridoxine 5'-phosphate (PNP) and inorganic phosphate. The protein is Pyridoxine 5'-phosphate synthase of Shigella dysenteriae serotype 1 (strain Sd197).